The following is a 91-amino-acid chain: Small ribosomal subunit protein uS19 (91 aa).

It belongs to the universal ribosomal protein uS19 family.

Functionally, protein S19 forms a complex with S13 that binds strongly to the 16S ribosomal RNA. This is Small ribosomal subunit protein uS19 from Pseudomonas syringae pv. tomato (strain ATCC BAA-871 / DC3000).